The following is a 348-amino-acid chain: Protein-arginine N-acetylglucosaminyltransferase SseK2 (348 aa).

Residues 64–66 (QWF), Tyr-88, and 237–240 (YLDA) contribute to the UDP-N-acetyl-alpha-D-glucosamine site. The short motif at 239 to 241 (DAD) is the DXD motif element. Residue Asp-241 coordinates Mn(2+). Glu-271 functions as the Proton acceptor in the catalytic mechanism. UDP-N-acetyl-alpha-D-glucosamine is bound by residues Asn-338, Ser-340, and 345-348 (SSWR). Mn(2+) contacts are provided by Asn-338 and Ser-340.

The protein belongs to the glycosyltransferase NleB family. Mn(2+) is required as a cofactor.

The protein resides in the secreted. Its subcellular location is the host Golgi apparatus. It carries out the reaction L-arginyl-[protein] + UDP-N-acetyl-alpha-D-glucosamine = N(omega)-(N-acetyl-beta-D-glucosaminyl)-L-arginyl-[protein] + UDP + H(+). Its activity is regulated as follows. Protein-arginine N-acetylglucosaminyltransferase activity is inhibited by 100066N compound (flavone analog) and 102644N compound (a substituted isoxazole). Functionally, protein-arginine N-acetylglucosaminyltransferase effector that catalyzes the transfer of a single N-acetylglucosamine (GlcNAc) to a conserved arginine residue in the death domain of host proteins such as FADD: arginine GlcNAcylation prevents homotypic/heterotypic death domain interactions. Also acts on host proteins without a death domain: catalyzes arginine GlcNAcylation of host small Rab1 GTPase, thereby preventing GTPase activity and leading to impaired host vesicular protein transport. In contrast to Ssek1, not able to disrupt TNF signaling in infected cells. This chain is Protein-arginine N-acetylglucosaminyltransferase SseK2, found in Salmonella typhimurium (strain SL1344).